The chain runs to 195 residues: Dynactin subunit 6 (195 aa).

It belongs to the dynactin subunits 5/6 family. Dynactin subunit 6 subfamily. In terms of assembly, member of the pointed-end complex of the dynactin shoulder complex which contains dctn4, dctn5 and dctn6 subunits and Actr10. Within the complex dctn6 forms a heterodimer with dctn5. Interacts with plk1.

It localises to the cytoplasm. The protein localises to the cytoskeleton. The protein resides in the chromosome. It is found in the centromere. Its subcellular location is the kinetochore. Part of the dynactin complex that activates the molecular motor dynein for ultra-processive transport along microtubules. This chain is Dynactin subunit 6 (dctn6), found in Danio rerio (Zebrafish).